The sequence spans 93 residues: Long neurotoxin 1 (93 aa).

The N-terminal stretch at 1–21 is a signal peptide; that stretch reads MKTLLLTLVVVTIVCLDLGNS. 5 cysteine pairs are disulfide-bonded: cysteine 24-cysteine 42, cysteine 35-cysteine 63, cysteine 48-cysteine 52, cysteine 67-cysteine 78, and cysteine 79-cysteine 84.

It belongs to the three-finger toxin family. Long-chain subfamily. Type II alpha-neurotoxin sub-subfamily. Expressed by the venom gland.

It localises to the secreted. Functionally, binds with high affinity to muscular (alpha-1/CHRNA1) and neuronal (alpha-7/CHRNA7) nicotinic acetylcholine receptor (nAChR) and inhibits acetylcholine from binding to the receptor, thereby impairing neuromuscular and neuronal transmission. The protein is Long neurotoxin 1 of Tropidechis carinatus (Australian rough-scaled snake).